Reading from the N-terminus, the 675-residue chain is Protein brown (675 aa).

Topologically, residues 1–419 (MQESGGSSGQ…TEDLRNIRSG (419 aa)) are cytoplasmic. The region spanning 34–261 (YSFWNECRKK…EVVAESHESL (228 aa)) is the ABC transporter domain. 66 to 73 (GGSGAGKT) contacts ATP. The disordered stretch occupies residues 229–249 (EDSFETPSGESSASGSGSKSI). Positions 236–248 (SGESSASGSGSKS) are enriched in low complexity. The helical transmembrane segment at 420 to 440 (LIAFGFFMITAVTLSLMYSGI) threads the bilayer. Over 441-460 (GGLTQRTVQDVGGSIFMLSN) the chain is Extracellular. Residues 461-481 (EMIFTFSYGVTYIFPAALPII) form a helical membrane-spanning segment. Topologically, residues 482-497 (RREVGEGTYSLSAYYV) are cytoplasmic. The chain crosses the membrane as a helical span at residues 498 to 518 (ALVLSFVPVAFFKGYVFLSVI). The Extracellular portion of the chain corresponds to 519 to 531 (YASIYYTRGFLLY). The chain crosses the membrane as a helical span at residues 532–552 (LSMGFLMSLSAVAAVGYGVFL). The Cytoplasmic portion of the chain corresponds to 553–568 (SSLFESDKMASECAAP). A helical transmembrane segment spans residues 569–589 (FDLIFLIFGGTYMNVDTVPGL). Over 590-644 (KYLSLFFYSNEALMYKFWIDIDNIDCPVNEDHPCIKTGVEVLQQGSYRNADYTYW) the chain is Extracellular. A helical transmembrane segment spans residues 645 to 665 (LDCFSLVVVAVIFHIVSFGLV). The Cytoplasmic portion of the chain corresponds to 666-675 (RRYIHRSGYY).

This sequence belongs to the ABC transporter superfamily. ABCG family. Eye pigment precursor importer (TC 3.A.1.204) subfamily. May form a heterodimer with w/white.

The protein localises to the membrane. It carries out the reaction guanine(out) + ATP + H2O = guanine(in) + ADP + phosphate + H(+). It catalyses the reaction riboflavin(in) + ATP + H2O = riboflavin(out) + ADP + phosphate + H(+). The enzyme catalyses (6S)-5,6,7,8-tetrahydrofolate(out) + ATP + H2O = (6S)-5,6,7,8-tetrahydrofolate(in) + ADP + phosphate + H(+). In terms of biological role, ATP-dependent transporter of the ATP-binding cassette (ABC) family which transports various molecules including bioamines, neurotransmitters and metabolic intermediates. In the eye and probably in association with w/white, required for the transport of the eye red pigment precursor, guanine, into pigment cell granules. In Malpighian tubules, involved in guanine uptake. Probably in association with w/white, involved in aging-induced intestinal stem cell proliferation in the midgut by regulating tetrahydrofolate transport. This chain is Protein brown, found in Drosophila melanogaster (Fruit fly).